We begin with the raw amino-acid sequence, 910 residues long: ZZ-type zinc finger-containing protein 3 (910 aa).

Disordered regions lie at residues 41–117 (AHPE…RQAE) and 133–153 (EATN…PGEH). Positions 67 to 84 (QKGTNNGRTSDVRQQSAR) are enriched in polar residues. A phosphoserine mark is found at Ser89, Ser96, Ser137, Ser138, and Ser142. The segment covering 96 to 116 (SSSEKDDLERQALESCERRQA) has biased composition (basic and acidic residues). The span at 142–153 (SPVKPDKEPGEH) shows a compositional bias: basic and acidic residues. A Glycyl lysine isopeptide (Lys-Gly) (interchain with G-Cter in SUMO2) cross-link involves residue Lys283. Disordered regions lie at residues 303–358 (TAES…VSGE), 373–444 (TSLS…PQDG), and 609–641 (ARPK…SHNR). Polar residues-rich tracts occupy residues 331-347 (SSAS…NPLD) and 397-434 (SSPT…SESP). N6-acetyllysine is present on Lys401. Ser613 is subject to Phosphoserine. Positions 613-622 (SPLDPKKDGE) are enriched in basic and acidic residues. A Glycyl lysine isopeptide (Lys-Gly) (interchain with G-Cter in SUMO2) cross-link involves residue Lys654. Residues 654–714 (KPETFNQLWT…RVQKYFIKLT (61 aa)) enclose the HTH myb-type domain. The segment at residues 687–710 (WQKIADELGNRTAKQVASRVQKYF) is a DNA-binding region (H-T-H motif). Position 708 is an N6-acetyllysine (Lys708). Lys715 participates in a covalent cross-link: Glycyl lysine isopeptide (Lys-Gly) (interchain with G-Cter in SUMO2). The ZZ-type zinc finger occupies 825 to 884 (HVGFKCDNCGVEPIQGVRWHCQDCPPEMSLDFCDSCSDCPHETDIHKEDHQLEPVYKSET). 8 residues coordinate Zn(2+): Cys830, Cys833, Cys845, Cys848, Cys857, Cys860, His870, and His874.

In terms of assembly, component of the ADA2A-containing complex (ATAC), composed of KAT14, KAT2A, TADA2L, TADA3L, ZZ3, MBIP, WDR5, YEATS2, CCDC101 and DR1. Interacts via (ZZ-type zinc finger) with histone H3 in a methylation-independent manner and acetylation on 'Lys-4' (H3K4ac) moderately enhances the interaction.

The protein localises to the nucleus. Functionally, histone H3 reader that is required for the ATAC complex-mediated maintenance of histone acetylation and gene activation. Component of the ATAC complex, a complex with histone acetyltransferase activity on histones H3 and H4. This chain is ZZ-type zinc finger-containing protein 3 (Zzz3), found in Mus musculus (Mouse).